The sequence spans 349 residues: N-formyl peptide receptor 3 (349 aa).

Topologically, residues 1-27 (METNFSIPLNETEEVLPEPAGHTVLWI) are extracellular. Asn4 and Asn10 each carry an N-linked (GlcNAc...) asparagine glycan. The chain crosses the membrane as a helical span at residues 28-50 (FSLLVHGVTFVFGVLGNGLVIWV). Residues 51–61 (AGFRMTRTVNT) are Cytoplasmic-facing. Residues 62-83 (ICYLNLALADFSFSAILPFRMV) traverse the membrane as a helical segment. Residues 84–100 (SVAMREKWPFGSFLCKL) are Extracellular-facing. Cys98 and Cys176 are oxidised to a cystine. Residues 101–121 (VHVMIDINLFVSVYLITIIAL) form a helical membrane-spanning segment. Over 122-140 (DRCICVLHPAWAQNHRTMS) the chain is Cytoplasmic. Residues 141-162 (LAKRVMTGLWILTIVLTLPNFI) form a helical membrane-spanning segment. Topologically, residues 163-205 (FWTTIRTTNGDTYCIFNFAFWGDTAVERLNVFITMAKVFLILH) are extracellular. A helical membrane pass occupies residues 206–226 (FIIGFSMPMSIITVCYGIIAA). The Cytoplasmic segment spans residues 227-242 (KIHRNHMIKSSRPLRV). A helical membrane pass occupies residues 243-266 (FAAVVASFFICWFPYELIGILMAV). Topologically, residues 267 to 286 (WLKEMLLNGKYKIILVLINP) are extracellular. A helical transmembrane segment spans residues 287-306 (TSSLAFFNSCLNPILYVFMG). The Cytoplasmic segment spans residues 307-349 (RNFQERLIRSLPTSLERALTEVPDSAQTSNTHTTSASPPEETE). The interval 327–349 (EVPDSAQTSNTHTTSASPPEETE) is disordered. Residues 331–343 (SAQTSNTHTTSAS) are compositionally biased toward polar residues.

Belongs to the G-protein coupled receptor 1 family.

It localises to the cell membrane. In terms of biological role, low affinity receptor for N-formyl-methionyl peptides, which are powerful neutrophils chemotactic factors. Binding of FMLP to the receptor causes activation of neutrophils. This response is mediated via a G-protein that activates a phosphatidylinositol-calcium second messenger system. The sequence is that of N-formyl peptide receptor 3 (FPR3) from Pan troglodytes (Chimpanzee).